A 152-amino-acid chain; its full sequence is Small ribosomal subunit protein uS19 (152 aa).

Belongs to the universal ribosomal protein uS19 family.

Its function is as follows. Protein S19 forms a complex with S13 that binds strongly to the 16S ribosomal RNA. The sequence is that of Small ribosomal subunit protein uS19 (rps19) from Methanocaldococcus jannaschii (strain ATCC 43067 / DSM 2661 / JAL-1 / JCM 10045 / NBRC 100440) (Methanococcus jannaschii).